An 869-amino-acid polypeptide reads, in one-letter code: Alanine--tRNA ligase (869 aa).

The Zn(2+) site is built by H559, H563, C660, and H664.

This sequence belongs to the class-II aminoacyl-tRNA synthetase family. Requires Zn(2+) as cofactor.

The protein localises to the cytoplasm. It carries out the reaction tRNA(Ala) + L-alanine + ATP = L-alanyl-tRNA(Ala) + AMP + diphosphate. Its function is as follows. Catalyzes the attachment of alanine to tRNA(Ala) in a two-step reaction: alanine is first activated by ATP to form Ala-AMP and then transferred to the acceptor end of tRNA(Ala). Also edits incorrectly charged Ser-tRNA(Ala) and Gly-tRNA(Ala) via its editing domain. The protein is Alanine--tRNA ligase of Herminiimonas arsenicoxydans.